We begin with the raw amino-acid sequence, 246 residues long: Ly6/PLAUR domain-containing protein 4 (246 aa).

An N-terminal signal peptide occupies residues 1-26 (MILQAWRSLQLLYLLEAISLLPCTEA). Asn-117 is a glycosylation site (N-linked (GlcNAc...) asparagine). A UPAR/Ly6 domain is found at 142–223 (CPSCVGKHDQ…INVLDKSEAV (82 aa)). A lipid anchor (GPI-anchor amidated alanine) is attached at Ala-225. Positions 226-246 (GHCSQGISWSVLLCLLILLRD) are cleaved as a propeptide — removed in mature form.

It is found in the cell membrane. This is Ly6/PLAUR domain-containing protein 4 (Lypd4) from Mus musculus (Mouse).